A 130-amino-acid polypeptide reads, in one-letter code: Small ribosomal subunit protein uS8 (130 aa).

The protein belongs to the universal ribosomal protein uS8 family. In terms of assembly, part of the 30S ribosomal subunit. Contacts proteins S5 and S12.

In terms of biological role, one of the primary rRNA binding proteins, it binds directly to 16S rRNA central domain where it helps coordinate assembly of the platform of the 30S subunit. The polypeptide is Small ribosomal subunit protein uS8 (Pseudoalteromonas atlantica (strain T6c / ATCC BAA-1087)).